The primary structure comprises 296 residues: Decaprenyl diphosphate synthase (296 aa).

A disordered region spans residues 1-58; it reads MVRNERTLKSTDFPQLPPAPDDYPTFPDKSTWPVVFPMLPPSPDGGPRRPPQHTSKAV. The active site involves Asp-76. Asp-76 serves as a coordination point for Mg(2+). Substrate-binding positions include 77–80, Trp-81, Arg-89, His-93, and 121–123; these read GNGR and STE. Catalysis depends on Asn-124, which acts as the Proton acceptor. Substrate is bound by residues Trp-125, Arg-127, Arg-244, and 250–252; that span reads RSS. Glu-263 contributes to the Mg(2+) binding site.

It belongs to the UPP synthase family. Homodimer. Requires Mg(2+) as cofactor.

It is found in the cell membrane. It catalyses the reaction (2Z,6E)-farnesyl diphosphate + 7 isopentenyl diphosphate = (2Z,6Z,10Z,14Z,18Z,22Z,26Z,30Z,34E)-decaprenyl diphosphate + 7 diphosphate. The catalysed reaction is n isopentenyl diphosphate + (2E,6E)-farnesyl diphosphate = a di-trans,poly-cis-polyprenyl diphosphate + n diphosphate. Its function is as follows. Catalyzes the sequential condensation of isopentenyl diphosphate (IPP) in the cis configuration with (2Z,6E)-farnesyl diphosphate (Z-FPP or EZ-FPP) generating the 50 carbon product trans,polycis-decaprenyl diphosphate. When (2E,6E)-farnesyl diphosphate (E-FPP or EE-FPP) is used in vitro, both primary products decaprenyl diphosphate and (2E,6E,10E)-geranylgeranyl diphosphate (EEE-GGPP) are synthesized. M.tuberculosis does not synthesize (2E,6E,10Z)-geranylgeranyl diphosphate (EEZ-GGPP) and heptaprenyl diphosphate. Can also accept many different allylic substrates, including E-geranyl diphosphate (E-GPP), neryl diphosphate (NPP), and all-trans-geranyl-geranyl diphosphate. The chain is Decaprenyl diphosphate synthase (uppS) from Mycobacterium leprae (strain TN).